The following is a 463-amino-acid chain: MTLGQFGGLFVVYLISVIFILSLTWMEFRRVRFNFNVLFSLLYLLTFYFGFPFTCVLVFRFGVEVVPVQYLLQAMLSATAFYAVYYVSYKTRLRQKTSVPRAPLLTVNRVEANLTWLLLALIAVATVGIFFLNNGFLLFKLRSYSQIFSSDVSGVALKRFFYFFIPAMLVVYFLRQTQRAWLLFLIGTVAFGMLTYVIVGGTRANLIIAFALFLFIGIVRGWITLWMLVAAGIFGIVGMFWLALKRYGLDVSGDYAFYTFLYLTRDTFSPWENLALLWQNYDKIEFQGLAPIARDFYVFIPSWLWPDRPNLVLNSANYFTWEVLNNHSGLAISPTLLGSLVVMGGVLFIPLGAIAVGLVIKWFDWVYELGKNDSNRYKAAILQAFCFGAVFNIIVLTREGVDSFVSRVVFFCLIFGLCLLVAKLLYWLLESAGLIRQRLRRMRATPLAPTPNTVQDPVIKEQI.

A run of 11 helical transmembrane segments spans residues 6-26, 39-59, 65-85, 112-132, 154-174, 180-200, 201-221, 222-242, 340-360, 377-397, and 408-428; these read FGGL…LTWM, FSLL…VLVF, VVPV…YAVY, ANLT…IFFL, GVAL…VYFL, AWLL…VIVG, GTRA…IVRG, WITL…MFWL, LVVM…GLVI, YKAA…IVLT, and VVFF…LYWL.

It belongs to the WzyE family. As to quaternary structure, probably part of a complex composed of WzxE, WzyE and WzzE.

It localises to the cell inner membrane. Its pathway is bacterial outer membrane biogenesis; enterobacterial common antigen biosynthesis. In terms of biological role, probably involved in the polymerization of enterobacterial common antigen (ECA) trisaccharide repeat units. This Pectobacterium atrosepticum (strain SCRI 1043 / ATCC BAA-672) (Erwinia carotovora subsp. atroseptica) protein is Probable ECA polymerase.